Here is a 147-residue protein sequence, read N- to C-terminus: MRIQKQQYTISSNSRINLLGILVLNVVCGKSSIFFSHPQRLGKLGGSSLGSTGPFQTLSINFCIGCFLFNSNHFDLLFSLPSSSSILSMSVLEKFCSCIDSVTRCCPSQSLETPGSVASHVVLALSSKCTPIQFNAKWSISHKSNTG.

Residues 13–35 traverse the membrane as a helical segment; the sequence is NSRINLLGILVLNVVCGKSSIFF.

It is found in the membrane. This is an uncharacterized protein from Saccharomyces cerevisiae (strain ATCC 204508 / S288c) (Baker's yeast).